We begin with the raw amino-acid sequence, 323 residues long: MFNFANFYQLIAQDTRLQPWLNVLPQQLTDWQNAEHGDFPRWLKALNKIPEGAPDQIDIKHSVTISNDTPFHQGELKKLESLLRTFHPWRKGPYTVHGIHIDTEWRSDWKWDRVLPHISPLKNRSVLDVGCGNGYHMWRMLGEGARLCVGIDPSHLFLIQFEAIRKLMGGDQRAHLLPLGIEQLPKLEAFDTVFSMGVLYHRRSPLDHLIQLKDQLVSGGELILETLVIEGDETAVLVPKERYAQMRNVYFFPSARALKVWLELVGFEDVRIVDENVTSVDEQRTTNWMTHNSLPDYLDQNDPSKTVEGYPAPRRAILVAKKP.

Carboxy-S-adenosyl-L-methionine is bound by residues Lys91, Trp105, Lys110, Gly130, 152–154 (DPS), 181–182 (IE), Met196, Tyr200, and Arg315.

This sequence belongs to the class I-like SAM-binding methyltransferase superfamily. CmoB family. As to quaternary structure, homotetramer.

The catalysed reaction is carboxy-S-adenosyl-L-methionine + 5-hydroxyuridine(34) in tRNA = 5-carboxymethoxyuridine(34) in tRNA + S-adenosyl-L-homocysteine + H(+). Functionally, catalyzes carboxymethyl transfer from carboxy-S-adenosyl-L-methionine (Cx-SAM) to 5-hydroxyuridine (ho5U) to form 5-carboxymethoxyuridine (cmo5U) at position 34 in tRNAs. This chain is tRNA U34 carboxymethyltransferase, found in Vibrio vulnificus (strain CMCP6).